The chain runs to 250 residues: Ribosomal RNA small subunit methyltransferase J (250 aa).

S-adenosyl-L-methionine contacts are provided by residues 101 to 102 (RD), 117 to 118 (ER), 153 to 154 (SS), and aspartate 171.

It belongs to the methyltransferase superfamily. RsmJ family.

Its subcellular location is the cytoplasm. It carries out the reaction guanosine(1516) in 16S rRNA + S-adenosyl-L-methionine = N(2)-methylguanosine(1516) in 16S rRNA + S-adenosyl-L-homocysteine + H(+). Functionally, specifically methylates the guanosine in position 1516 of 16S rRNA. This chain is Ribosomal RNA small subunit methyltransferase J, found in Escherichia fergusonii (strain ATCC 35469 / DSM 13698 / CCUG 18766 / IAM 14443 / JCM 21226 / LMG 7866 / NBRC 102419 / NCTC 12128 / CDC 0568-73).